Here is a 396-residue protein sequence, read N- to C-terminus: S-adenosylmethionine synthase (396 aa).

Residue His15 coordinates ATP. Asp17 lines the Mg(2+) pocket. Residue Glu43 participates in K(+) binding. Residues Glu56 and Gln99 each coordinate L-methionine. The interval 99–109 (QSGDIAQGVDT) is flexible loop. Residues 173 to 175 (DGK), 241 to 242 (RF), Asp250, 256 to 257 (RK), Ala273, and Lys277 each bind ATP. Residue Asp250 participates in L-methionine binding. Residue Lys281 coordinates L-methionine.

The protein belongs to the AdoMet synthase family. In terms of assembly, homotetramer; dimer of dimers. Mg(2+) is required as a cofactor. Requires K(+) as cofactor.

It is found in the cytoplasm. The catalysed reaction is L-methionine + ATP + H2O = S-adenosyl-L-methionine + phosphate + diphosphate. It participates in amino-acid biosynthesis; S-adenosyl-L-methionine biosynthesis; S-adenosyl-L-methionine from L-methionine: step 1/1. Catalyzes the formation of S-adenosylmethionine (AdoMet) from methionine and ATP. The overall synthetic reaction is composed of two sequential steps, AdoMet formation and the subsequent tripolyphosphate hydrolysis which occurs prior to release of AdoMet from the enzyme. This Nocardioides sp. (strain ATCC BAA-499 / JS614) protein is S-adenosylmethionine synthase.